Here is a 314-residue protein sequence, read N- to C-terminus: Probable cell division protein WhiA (314 aa).

Residues 274–305 (SLAELGDRLEISKSGANHRMRKLKALEDMINA) constitute a DNA-binding region (H-T-H motif).

The protein belongs to the WhiA family.

In terms of biological role, involved in cell division and chromosome segregation. The chain is Probable cell division protein WhiA from Leuconostoc citreum (strain KM20).